The chain runs to 159 residues: Early E3 18.5 kDa glycoprotein (159 aa).

A signal peptide spans 1–17; the sequence is MRYMILGLLALAAVCSA. The Lumenal segment spans residues 18–123; it reads AKKVEFKEPA…PPQKCLENTG (106 aa). Cystine bridges form between Cys-28-Cys-45 and Cys-39-Cys-100. N-linked (GlcNAc...) asparagine; by host glycans are attached at residues Asn-29 and Asn-78. Residues 124–144 form a helical membrane-spanning segment; sequence TFCSTALLITALALVCTLLYL. The Cytoplasmic segment spans residues 145–159; the sequence is KYKSRRSFIDEKKMP. The Di-lysine motif signature appears at 156–159; sequence KKMP.

It belongs to the adenoviridae E19 family. Post-translationally, both disulfide bonds are absolutely critical for the interaction with MHC antigens. N-glycosylated; high-mannose.

The protein resides in the host endoplasmic reticulum membrane. Its function is as follows. Binds and retains class I heavy chains in the endoplasmic reticulum during the early period of virus infection, thereby impairing their transport to the cell surface. Also delays the expression of class I alleles that it cannot affect by direct retention. Binds transporters associated with antigen processing (TAP) and acts as a tapasin inhibitor, preventing class I/TAP association. In consequence, infected cells are masked for immune recognition by cytotoxic T-lymphocytes. In Homo sapiens (Human), this protein is Early E3 18.5 kDa glycoprotein.